The primary structure comprises 411 residues: S-inosyl-L-homocysteine hydrolase (411 aa).

Residues Asp121 and Glu146 each coordinate substrate. 147 to 149 (TTT) serves as a coordination point for NAD(+). The substrate site is built by Lys176 and Asp180. NAD(+) contacts are provided by residues Asn181, 210 to 215 (GYGWCG), Glu233, Asn268, 289 to 291 (SGH), and Asn335.

It belongs to the adenosylhomocysteinase family. The cofactor is NAD(+).

Its subcellular location is the cytoplasm. It carries out the reaction S-inosyl-L-homocysteine + H2O = L-homocysteine + inosine. It participates in amino-acid biosynthesis; S-adenosyl-L-methionine biosynthesis. Its function is as follows. Catalyzes the hydrolysis of S-inosyl-L-homocysteine (SIH) to L-homocysteine (Hcy) and inosine. Likely functions in a S-adenosyl-L-methionine (SAM) recycling pathway from S-adenosyl-L-homocysteine (SAH) produced from SAM-dependent methylation reactions. Can also catalyze the reverse reaction in vitro, i.e. the synthesis of SIH from Hcy and inosine. The protein is S-inosyl-L-homocysteine hydrolase of Methanosarcina mazei (strain ATCC BAA-159 / DSM 3647 / Goe1 / Go1 / JCM 11833 / OCM 88) (Methanosarcina frisia).